Here is a 224-residue protein sequence, read N- to C-terminus: UPF0758 protein CV_3079 (224 aa).

An MPN domain is found at 102–224 (ALSSPQQVRD…AESFAERGWL (123 aa)). Positions 173, 175, and 186 each coordinate Zn(2+). The JAMM motif signature appears at 173-186 (HNHPSGVSEPSSAD).

The protein belongs to the UPF0758 family.

This chain is UPF0758 protein CV_3079, found in Chromobacterium violaceum (strain ATCC 12472 / DSM 30191 / JCM 1249 / CCUG 213 / NBRC 12614 / NCIMB 9131 / NCTC 9757 / MK).